A 550-amino-acid chain; its full sequence is Hydroxylamine reductase (550 aa).

Residues cysteine 3, cysteine 6, cysteine 18, and cysteine 25 each coordinate [2Fe-2S] cluster. Hybrid [4Fe-2O-2S] cluster contacts are provided by histidine 249, glutamate 273, cysteine 317, cysteine 405, cysteine 433, cysteine 458, glutamate 492, and lysine 494. Position 405 is a cysteine persulfide (cysteine 405).

It belongs to the HCP family. The cofactor is [2Fe-2S] cluster. Hybrid [4Fe-2O-2S] cluster is required as a cofactor.

It is found in the cytoplasm. The catalysed reaction is A + NH4(+) + H2O = hydroxylamine + AH2 + H(+). Catalyzes the reduction of hydroxylamine to form NH(3) and H(2)O. This is Hydroxylamine reductase from Enterobacter sp. (strain 638).